A 319-amino-acid polypeptide reads, in one-letter code: Beta-ketoacyl-[acyl-carrier-protein] synthase III (319 aa).

Residues cysteine 115 and histidine 246 contribute to the active site. Positions 247-251 (QANLR) are ACP-binding. Asparagine 276 is an active-site residue.

The protein belongs to the thiolase-like superfamily. FabH family. As to quaternary structure, homodimer.

It is found in the cytoplasm. The catalysed reaction is malonyl-[ACP] + acetyl-CoA + H(+) = 3-oxobutanoyl-[ACP] + CO2 + CoA. The protein operates within lipid metabolism; fatty acid biosynthesis. Catalyzes the condensation reaction of fatty acid synthesis by the addition to an acyl acceptor of two carbons from malonyl-ACP. Catalyzes the first condensation reaction which initiates fatty acid synthesis and may therefore play a role in governing the total rate of fatty acid production. Possesses both acetoacetyl-ACP synthase and acetyl transacylase activities. Its substrate specificity determines the biosynthesis of branched-chain and/or straight-chain of fatty acids. The polypeptide is Beta-ketoacyl-[acyl-carrier-protein] synthase III (Coxiella burnetii (strain RSA 331 / Henzerling II)).